The primary structure comprises 161 residues: Transcriptional repressor NrdR (161 aa).

Basic residues predominate over residues 1–11 (MQCPHCQHHNS). Residues 1–21 (MQCPHCQHHNSRVLESRSSEG) are disordered. A zinc finger spans residues 3 to 34 (CPHCQHHNSRVLESRSSEGGQSIRRRRECLEC). The ATP-cone domain maps to 49 to 139 (VTVIKQDGER…VYGRFQGIAD (91 aa)).

Belongs to the NrdR family. It depends on Zn(2+) as a cofactor.

Its function is as follows. Negatively regulates transcription of bacterial ribonucleotide reductase nrd genes and operons by binding to NrdR-boxes. The protein is Transcriptional repressor NrdR of Synechocystis sp. (strain ATCC 27184 / PCC 6803 / Kazusa).